Reading from the N-terminus, the 684-residue chain is Probable pectin methyltransferase QUA2 (684 aa).

The segment at 1 to 35 (MSMPLQRGISGVRVSDSSDDLRDSQMKDKTERARS) is disordered. The Cytoplasmic portion of the chain corresponds to 1–86 (MSMPLQRGIS…RHRLMLLFLK (86 aa)). The span at 19–35 (DDLRDSQMKDKTERARS) shows a compositional bias: basic and acidic residues. Residues 87 to 107 (ISLVLIVVIALAGSFWWTISI) traverse the membrane as a helical; Signal-anchor for type II membrane protein segment. Topologically, residues 108–684 (STSSRGHVYH…QKPFTKRQSI (577 aa)) are lumenal. Asparagine 161 and asparagine 476 each carry an N-linked (GlcNAc...) asparagine glycan.

The protein belongs to the methyltransferase superfamily. In terms of tissue distribution, ubiquitous.

The protein resides in the golgi apparatus membrane. The protein operates within glycan metabolism; pectin biosynthesis. Functionally, may be involved in the synthesis of homogalacturonan. Required for normal cell adhesion and plant development. The polypeptide is Probable pectin methyltransferase QUA2 (QUA2) (Arabidopsis thaliana (Mouse-ear cress)).